The primary structure comprises 59 residues: Large ribosomal subunit protein bL32 (59 aa).

Positions 1–20 are disordered; the sequence is MAVPRNRHSNARKNIRRSHH.

The protein belongs to the bacterial ribosomal protein bL32 family.

The chain is Large ribosomal subunit protein bL32 (rpmF) from Chlamydia muridarum (strain MoPn / Nigg).